The sequence spans 303 residues: Methionyl-tRNA formyltransferase (303 aa).

108-111 (SDLP) serves as a coordination point for (6S)-5,6,7,8-tetrahydrofolate.

It belongs to the Fmt family.

It carries out the reaction L-methionyl-tRNA(fMet) + (6R)-10-formyltetrahydrofolate = N-formyl-L-methionyl-tRNA(fMet) + (6S)-5,6,7,8-tetrahydrofolate + H(+). In terms of biological role, attaches a formyl group to the free amino group of methionyl-tRNA(fMet). The formyl group appears to play a dual role in the initiator identity of N-formylmethionyl-tRNA by promoting its recognition by IF2 and preventing the misappropriation of this tRNA by the elongation apparatus. This chain is Methionyl-tRNA formyltransferase, found in Rickettsia canadensis (strain McKiel).